The primary structure comprises 232 residues: Small ribosomal subunit protein uS2 (232 aa).

Belongs to the universal ribosomal protein uS2 family.

In Alkaliphilus oremlandii (strain OhILAs) (Clostridium oremlandii (strain OhILAs)), this protein is Small ribosomal subunit protein uS2.